Consider the following 87-residue polypeptide: RNA-binding protein Hfq (87 aa).

One can recognise a Sm domain in the interval D9–V68.

Belongs to the Hfq family. Homohexamer.

Its function is as follows. RNA chaperone that binds small regulatory RNA (sRNAs) and mRNAs to facilitate mRNA translational regulation in response to envelope stress, environmental stress and changes in metabolite concentrations. Also binds with high specificity to tRNAs. This chain is RNA-binding protein Hfq, found in Teredinibacter turnerae (strain ATCC 39867 / T7901).